A 396-amino-acid chain; its full sequence is Chalcone synthase (396 aa).

Cys167 is a catalytic residue.

This sequence belongs to the thiolase-like superfamily. Chalcone/stilbene synthases family.

It carries out the reaction (E)-4-coumaroyl-CoA + 3 malonyl-CoA + 3 H(+) = 2',4,4',6'-tetrahydroxychalcone + 3 CO2 + 4 CoA. It participates in secondary metabolite biosynthesis; flavonoid biosynthesis. Its function is as follows. The primary product of this enzyme is 4,2',4',6'-tetrahydroxychalcone (also termed naringenin-chalcone or chalcone) which can under specific conditions spontaneously isomerize into naringenin. This is Chalcone synthase (CHS) from Chrysosplenium americanum (American golden saxifrage).